The following is an 89-amino-acid chain: Neuropeptide S (89 aa).

Positions 1 to 23 (MIGSLKFNFILFLLISTMHMFWC) are cleaved as a signal peptide. A propeptide spanning residues 24 to 67 (HPISSSKVPGKSDYFVILLNSCPTRMDRRVGLDFLKPILEKTLM) is cleaved from the precursor.

The protein localises to the secreted. In terms of biological role, modulates arousal and anxiety. May play an important anorexigenic role. Binds to its receptor NPSR1 with nanomolar affinity to increase intracellular calcium concentrations. This is Neuropeptide S (NPS) from Bos taurus (Bovine).